The following is a 207-amino-acid chain: Holliday junction branch migration complex subunit RuvA (207 aa).

A domain I region spans residues 1–65 (MYDYIRGTLT…ETEHLLYGFH (65 aa)). Residues 66–144 (SREERECFRI…DLLPLDSRVE (79 aa)) form a domain II region. The interval 145-150 (TSQTHT) is flexible linker. A domain III region spans residues 150–207 (TTSSCLEEGIQALAALGYSKIAAERMIAEAIKDLPEGSSLTDILPIALKKNFSGVNKD).

This sequence belongs to the RuvA family. Homotetramer. Forms an RuvA(8)-RuvB(12)-Holliday junction (HJ) complex. HJ DNA is sandwiched between 2 RuvA tetramers; dsDNA enters through RuvA and exits via RuvB. An RuvB hexamer assembles on each DNA strand where it exits the tetramer. Each RuvB hexamer is contacted by two RuvA subunits (via domain III) on 2 adjacent RuvB subunits; this complex drives branch migration. In the full resolvosome a probable DNA-RuvA(4)-RuvB(12)-RuvC(2) complex forms which resolves the HJ.

The protein localises to the cytoplasm. The RuvA-RuvB-RuvC complex processes Holliday junction (HJ) DNA during genetic recombination and DNA repair, while the RuvA-RuvB complex plays an important role in the rescue of blocked DNA replication forks via replication fork reversal (RFR). RuvA specifically binds to HJ cruciform DNA, conferring on it an open structure. The RuvB hexamer acts as an ATP-dependent pump, pulling dsDNA into and through the RuvAB complex. HJ branch migration allows RuvC to scan DNA until it finds its consensus sequence, where it cleaves and resolves the cruciform DNA. This is Holliday junction branch migration complex subunit RuvA from Chlamydia pneumoniae (Chlamydophila pneumoniae).